A 160-amino-acid chain; its full sequence is Protein TCP17 (160 aa).

It localises to the cytoplasm. In Trypanosoma cruzi, this protein is Protein TCP17.